A 123-amino-acid chain; its full sequence is MATINQLVRQPRKRSVEKSDVPALQNCPQRRGVCTRVYTTTPRKPNSALRKVCRVRLTNGFEVSSYIGGEGHNLQEHSVVLIRGGRVKDLPGVRYHTVRGSLDTSGVKGRNQGRSKYGTKRPK.

A disordered region spans residues 1–22; sequence MATINQLVRQPRKRSVEKSDVP. D89 is subject to 3-methylthioaspartic acid. Positions 100–123 are disordered; sequence GSLDTSGVKGRNQGRSKYGTKRPK. The segment covering 111–123 has biased composition (basic residues); sequence NQGRSKYGTKRPK.

This sequence belongs to the universal ribosomal protein uS12 family. As to quaternary structure, part of the 30S ribosomal subunit. Contacts proteins S8 and S17. May interact with IF1 in the 30S initiation complex.

With S4 and S5 plays an important role in translational accuracy. In terms of biological role, interacts with and stabilizes bases of the 16S rRNA that are involved in tRNA selection in the A site and with the mRNA backbone. Located at the interface of the 30S and 50S subunits, it traverses the body of the 30S subunit contacting proteins on the other side and probably holding the rRNA structure together. The combined cluster of proteins S8, S12 and S17 appears to hold together the shoulder and platform of the 30S subunit. The polypeptide is Small ribosomal subunit protein uS12 (Pseudomonas putida (strain GB-1)).